The sequence spans 284 residues: Bifunctional protein FolD (284 aa).

NADP(+)-binding positions include 165 to 167 (GRS) and S190.

This sequence belongs to the tetrahydrofolate dehydrogenase/cyclohydrolase family. In terms of assembly, homodimer.

It carries out the reaction (6R)-5,10-methylene-5,6,7,8-tetrahydrofolate + NADP(+) = (6R)-5,10-methenyltetrahydrofolate + NADPH. The enzyme catalyses (6R)-5,10-methenyltetrahydrofolate + H2O = (6R)-10-formyltetrahydrofolate + H(+). It participates in one-carbon metabolism; tetrahydrofolate interconversion. In terms of biological role, catalyzes the oxidation of 5,10-methylenetetrahydrofolate to 5,10-methenyltetrahydrofolate and then the hydrolysis of 5,10-methenyltetrahydrofolate to 10-formyltetrahydrofolate. The protein is Bifunctional protein FolD of Streptococcus equi subsp. zooepidemicus (strain H70).